The chain runs to 88 residues: Small ribosomal subunit protein uS15 (88 aa).

The span at 1-12 (MITQEEQQKIID) shows a compositional bias: basic and acidic residues. A disordered region spans residues 1 to 24 (MITQEEQQKIIDRFGNGPNDTGTP).

It belongs to the universal ribosomal protein uS15 family. In terms of assembly, part of the 30S ribosomal subunit. Forms a bridge to the 50S subunit in the 70S ribosome, contacting the 23S rRNA.

Functionally, one of the primary rRNA binding proteins, it binds directly to 16S rRNA where it helps nucleate assembly of the platform of the 30S subunit by binding and bridging several RNA helices of the 16S rRNA. In terms of biological role, forms an intersubunit bridge (bridge B4) with the 23S rRNA of the 50S subunit in the ribosome. The protein is Small ribosomal subunit protein uS15 of Salinibacter ruber (strain DSM 13855 / M31).